Consider the following 381-residue polypeptide: GDP-mannose transporter (381 aa).

Residues M1–P44 are Cytoplasmic-facing. Residues Q19 to S41 form a disordered region. The span at A26 to P35 shows a compositional bias: pro residues. The helical transmembrane segment at I45–V65 threads the bilayer. The Lumenal portion of the chain corresponds to L66–D70. A helical membrane pass occupies residues F71 to T91. The Cytoplasmic portion of the chain corresponds to C92 to R109. The chain crosses the membrane as a helical span at residues K110 to S126. Over K127–S133 the chain is Lumenal. Residues I134–Y150 traverse the membrane as a helical segment. At G151–S159 the chain is on the cytoplasmic side. Residues V160–A181 form a helical membrane-spanning segment. The Lumenal portion of the chain corresponds to D182–T199. The chain crosses the membrane as a helical span at residues L200–G220. Residues M221–D234 are Cytoplasmic-facing. A helical membrane pass occupies residues T235–E255. The Lumenal portion of the chain corresponds to D256–S273. The chain crosses the membrane as a helical span at residues I274–W294. Topologically, residues C295–T302 are cytoplasmic. The helical transmembrane segment at T303–F323 threads the bilayer. The Lumenal portion of the chain corresponds to D324 to P326. The chain crosses the membrane as a helical span at residues V327–V347. The Cytoplasmic portion of the chain corresponds to A348 to S381. Residues T358 to S381 are disordered. The segment covering P366 to S381 has biased composition (polar residues).

Belongs to the TPT transporter family. SLC35D subfamily. As to quaternary structure, homooligomer.

The protein resides in the golgi apparatus membrane. Its subcellular location is the cytoplasmic vesicle membrane. It is found in the endoplasmic reticulum membrane. Functionally, involved in the import of GDP-mannose from the cytoplasm into the Golgi lumen. The sequence is that of GDP-mannose transporter (gmt1) from Aspergillus niger (strain ATCC MYA-4892 / CBS 513.88 / FGSC A1513).